The primary structure comprises 128 residues: DELTA-urthionin-Uf1a (128 aa).

An N-terminal signal peptide occupies residues 1-24; it reads MEGKTVIVSLLLLSIVVGQIQVEA. Intrachain disulfides connect Cys-27/Cys-64, Cys-28/Cys-56, and Cys-40/Cys-50. Residues 67–128 constitute a propeptide, acidic domain; sequence LSIPEVTGEA…LCTKNSIETA (62 aa).

It belongs to the plant thionin (TC 1.C.44) family. As to expression, expressed in trichomes, that are stiff epidermal hairs located on the surface of petioles and leaves.

The protein resides in the secreted. Plant defense protein that causes pain by probable disruption of cell membranes. Shows cytotoxic activity against the neuroblastoma cell line SH-SY5Y and slightly weaker activity against several non-neuronal cell lines. In vivo, intraplantar injection into mice causes several nocifensive responses, along with swelling and redness. The chain is DELTA-urthionin-Uf1a from Urtica ferox (Tree nettle).